Here is a 488-residue protein sequence, read N- to C-terminus: Glutamyl-tRNA(Gln) amidotransferase subunit A (488 aa).

Catalysis depends on charge relay system residues lysine 76 and serine 152. Catalysis depends on serine 176, which acts as the Acyl-ester intermediate.

This sequence belongs to the amidase family. GatA subfamily. In terms of assembly, heterotrimer of A, B and C subunits.

It catalyses the reaction L-glutamyl-tRNA(Gln) + L-glutamine + ATP + H2O = L-glutaminyl-tRNA(Gln) + L-glutamate + ADP + phosphate + H(+). Allows the formation of correctly charged Gln-tRNA(Gln) through the transamidation of misacylated Glu-tRNA(Gln) in organisms which lack glutaminyl-tRNA synthetase. The reaction takes place in the presence of glutamine and ATP through an activated gamma-phospho-Glu-tRNA(Gln). The sequence is that of Glutamyl-tRNA(Gln) amidotransferase subunit A from Oceanobacillus iheyensis (strain DSM 14371 / CIP 107618 / JCM 11309 / KCTC 3954 / HTE831).